A 473-amino-acid chain; its full sequence is Cysteine--tRNA ligase (473 aa).

Cysteine 28 serves as a coordination point for Zn(2+). The 'HIGH' region motif lies at 30–40; it reads PTVYNYIHIGN. Zn(2+) contacts are provided by cysteine 210, histidine 235, and glutamate 239. A 'KMSKS' region motif is present at residues 267–271; sequence KMSKS. ATP is bound at residue lysine 270.

It belongs to the class-I aminoacyl-tRNA synthetase family. Monomer. Zn(2+) is required as a cofactor.

It is found in the cytoplasm. It catalyses the reaction tRNA(Cys) + L-cysteine + ATP = L-cysteinyl-tRNA(Cys) + AMP + diphosphate. This Fusobacterium nucleatum subsp. nucleatum (strain ATCC 25586 / DSM 15643 / BCRC 10681 / CIP 101130 / JCM 8532 / KCTC 2640 / LMG 13131 / VPI 4355) protein is Cysteine--tRNA ligase.